Reading from the N-terminus, the 81-residue chain is ATP synthase subunit c, chloroplastic (81 aa).

Transmembrane regions (helical) follow at residues A7–G27 and L57–A77.

Belongs to the ATPase C chain family. As to quaternary structure, F-type ATPases have 2 components, F(1) - the catalytic core - and F(0) - the membrane proton channel. F(1) has five subunits: alpha(3), beta(3), gamma(1), delta(1), epsilon(1). F(0) has four main subunits: a(1), b(1), b'(1) and c(10-14). The alpha and beta chains form an alternating ring which encloses part of the gamma chain. F(1) is attached to F(0) by a central stalk formed by the gamma and epsilon chains, while a peripheral stalk is formed by the delta, b and b' chains.

It is found in the plastid. Its subcellular location is the chloroplast thylakoid membrane. Functionally, f(1)F(0) ATP synthase produces ATP from ADP in the presence of a proton or sodium gradient. F-type ATPases consist of two structural domains, F(1) containing the extramembraneous catalytic core and F(0) containing the membrane proton channel, linked together by a central stalk and a peripheral stalk. During catalysis, ATP synthesis in the catalytic domain of F(1) is coupled via a rotary mechanism of the central stalk subunits to proton translocation. Key component of the F(0) channel; it plays a direct role in translocation across the membrane. A homomeric c-ring of between 10-14 subunits forms the central stalk rotor element with the F(1) delta and epsilon subunits. The chain is ATP synthase subunit c, chloroplastic from Pelargonium hortorum (Common geranium).